A 206-amino-acid chain; its full sequence is GTP cyclohydrolase 1 (206 aa).

Zn(2+) is bound by residues Cys-97, His-100, and Cys-168.

It belongs to the GTP cyclohydrolase I family. Toroid-shaped homodecamer, composed of two pentamers of five dimers.

The catalysed reaction is GTP + H2O = 7,8-dihydroneopterin 3'-triphosphate + formate + H(+). Its pathway is cofactor biosynthesis; 7,8-dihydroneopterin triphosphate biosynthesis; 7,8-dihydroneopterin triphosphate from GTP: step 1/1. The polypeptide is GTP cyclohydrolase 1 (Chromobacterium violaceum (strain ATCC 12472 / DSM 30191 / JCM 1249 / CCUG 213 / NBRC 12614 / NCIMB 9131 / NCTC 9757 / MK)).